A 398-amino-acid polypeptide reads, in one-letter code: Cystathionine gamma-lyase (398 aa).

Phosphoserine is present on Ser50. Residues Arg61, Tyr113, and Arg118 each coordinate substrate. Position 211 is an N6-(pyridoxal phosphate)lysine (Lys211). Residue Glu338 participates in substrate binding.

This sequence belongs to the trans-sulfuration enzymes family. In terms of assembly, homotetramer. Interacts with CALM in a calcium-dependent manner. Requires pyridoxal 5'-phosphate as cofactor.

It localises to the cytoplasm. The enzyme catalyses L,L-cystathionine + H2O = 2-oxobutanoate + L-cysteine + NH4(+). The catalysed reaction is L-homoserine = 2-oxobutanoate + NH4(+). It carries out the reaction L-selenocystathionine + H2O = L-selenocysteine + 2-oxobutanoate + NH4(+). It catalyses the reaction L-cysteine + H2O = hydrogen sulfide + pyruvate + NH4(+) + H(+). The enzyme catalyses L-homocysteine + H2O = 2-oxobutanoate + hydrogen sulfide + NH4(+) + H(+). The protein operates within amino-acid biosynthesis; L-cysteine biosynthesis; L-cysteine from L-homocysteine and L-serine: step 2/2. Its function is as follows. Catalyzes the last step in the trans-sulfuration pathway from L-methionine to L-cysteine in a pyridoxal-5'-phosphate (PLP)-dependent manner, which consists on cleaving the L,L-cystathionine molecule into L-cysteine, ammonia and 2-oxobutanoate. Part of the L-cysteine derived from the trans-sulfuration pathway is utilized for biosynthesis of the ubiquitous antioxidant glutathione. Besides its role in the conversion of L-cystathionine into L-cysteine, it utilizes L-cysteine and L-homocysteine as substrates (at much lower rates than L,L-cystathionine) to produce hydrogen sulfide (H2S). In vitro, it converts two L-cysteine molecules into lanthionine and H2S, and two L-homocysteine molecules to homolanthionine and H2S, which can be particularly relevant under conditions of severe hyperhomocysteinemia. Lanthionine and homolanthionine are structural homologs of L,L-cystathionine that differ by the absence or presence of an extra methylene group, respectively. Acts as a cysteine-protein sulfhydrase by mediating sulfhydration of target proteins: sulfhydration consists of converting -SH groups into -SSH on specific cysteine residues of target proteins such as GAPDH, PTPN1 and NF-kappa-B subunit RELA, thereby regulating their function. By generating the gasotransmitter H2S, it participates in a number of physiological processes such as vasodilation, bone protection, and inflammation. Plays an essential role in myogenesis by contributing to the biogenesis of H2S in skeletal muscle tissue. Can also accept homoserine as substrate. Catalyzes the elimination of selenocystathionine (which can be derived from the diet) to yield selenocysteine, ammonia and 2-oxobutanoate. The chain is Cystathionine gamma-lyase (Cth) from Rattus norvegicus (Rat).